The chain runs to 354 residues: Inactive ADP-ribosyltransferase ARH2 (354 aa).

Ser27 is modified (phosphoserine).

Belongs to the ADP-ribosylglycohydrolase family.

Its subcellular location is the cytoplasm. The protein resides in the myofibril. It localises to the sarcomere. Functionally, required for myofibril assembly and outgrowth of the cardiac chambers in the developing heart. Appears to be catalytically inactive, showing no activity against O-acetyl-ADP-ribose. The protein is Inactive ADP-ribosyltransferase ARH2 (ADPRHL1) of Pongo abelii (Sumatran orangutan).